Consider the following 262-residue polypeptide: Carbonic anhydrase 13 (262 aa).

The region spanning Leu-4–Phe-261 is the Alpha-carbonic anhydrase domain. His-65 serves as the catalytic Proton donor/acceptor. Zn(2+)-binding residues include His-95, His-97, and His-120. Thr-200–Val-201 contributes to the substrate binding site.

This sequence belongs to the alpha-carbonic anhydrase family. It depends on Zn(2+) as a cofactor. Expressed in spleen, lung, kidney, heart, brain, skeletal muscle and testis.

It catalyses the reaction hydrogencarbonate + H(+) = CO2 + H2O. Inhibited by coumarins, sulfonamide derivatives such as acetazolamide (AZA) and Foscarnet (phosphonoformate trisodium salt). Its function is as follows. Reversible hydration of carbon dioxide. This chain is Carbonic anhydrase 13 (Ca13), found in Mus musculus (Mouse).